The following is a 447-amino-acid chain: Putative branched-chain amino acid carrier protein SAR1419 (447 aa).

12 helical membrane passes run 6 to 26 (WVIG…IFPP), 40 to 60 (ILAF…VGAL), 74 to 94 (PKFS…LFAI), 114 to 134 (SSIA…YICL), 143 to 163 (IGSL…IKAY), 193 to 213 (GYLT…VNAV), 229 to 249 (LTAG…LGYI), 290 to 310 (LLGI…IVAV), 326 to 346 (FVLV…NAVI), 350 to 370 (IPVL…ILIA), 382 to 402 (IPVI…LGWL), and 417 to 437 (LEWF…GIFV).

This sequence belongs to the branched chain amino acid transporter family.

The protein resides in the cell membrane. Its function is as follows. Component of the transport system for branched-chain amino acids (leucine, isoleucine and valine), which is coupled to a proton motive force (Potential). Contributes to NaCl tolerance. This is Putative branched-chain amino acid carrier protein SAR1419 from Staphylococcus aureus (strain MRSA252).